The primary structure comprises 500 residues: L-arabinose isomerase (500 aa).

Mn(2+) is bound by residues Glu306, Glu333, His350, and His450.

This sequence belongs to the arabinose isomerase family. Homohexamer. It depends on Mn(2+) as a cofactor.

The catalysed reaction is beta-L-arabinopyranose = L-ribulose. Its pathway is carbohydrate degradation; L-arabinose degradation via L-ribulose; D-xylulose 5-phosphate from L-arabinose (bacterial route): step 1/3. In terms of biological role, catalyzes the conversion of L-arabinose to L-ribulose. The polypeptide is L-arabinose isomerase (Shigella boydii serotype 18 (strain CDC 3083-94 / BS512)).